The chain runs to 577 residues: Protein NRT1/ PTR FAMILY 6.2 (577 aa).

A run of 12 helical transmembrane segments spans residues 28–48 (WITA…TMGI), 74–94 (FMGT…SFLG), 96–116 (FKTI…LAVA), 134–154 (IPAT…IALG), 183–203 (FFFN…VTVL), 214–234 (WAYG…LCGT), 332–352 (LLPI…MITF), 369–389 (IPAG…LAVY), 409–429 (LQRI…AALV), 447–467 (ISVF…AFIY), 488–508 (GLFL…VSIV), and 535–555 (WLLV…ALWF).

It belongs to the major facilitator superfamily. Proton-dependent oligopeptide transporter (POT/PTR) (TC 2.A.17) family. As to expression, expressed in shoots, leaves, flowers and siliques. Expressed in leaf petiole.

It localises to the membrane. In terms of biological role, low-affinity proton-dependent nitrate transporter. Not involved in dipeptides transport. The chain is Protein NRT1/ PTR FAMILY 6.2 (NPF6.2) from Arabidopsis thaliana (Mouse-ear cress).